Reading from the N-terminus, the 211-residue chain is uncharacterized protein (211 aa).

Composition is skewed to low complexity over residues 1 to 19 (MQDPHVPSSPTISSVSSSD) and 61 to 74 (SPSVAISRASSSNA). 2 disordered regions span residues 1–27 (MQDPHVPSSPTISSVSSSDLDTESTGS) and 54–94 (ASSR…EPHR).

In terms of assembly, interacts with RLK902. In terms of tissue distribution, expressed in inflorescences, stems, rosette leaves and weakly in roots.

This is an uncharacterized protein from Arabidopsis thaliana (Mouse-ear cress).